Here is a 496-residue protein sequence, read N- to C-terminus: Polyphosphate:AMP phosphotransferase (496 aa).

2 PPK2 regions span residues 11–234 (IDKD…LQAA) and 269–495 (LDKD…YKKD).

The protein belongs to the polyphosphate kinase 2 (PPK2) family. Class II subfamily. Homodimer. It depends on Mg(2+) as a cofactor.

The catalysed reaction is [phosphate](n) + ADP = [phosphate](n+1) + AMP. Functionally, uses inorganic polyphosphate (polyP) as a donor to convert AMP to ADP. Can also convert GMP to GDP, with lower efficiency. Cannot dephosphorylate ADP in the presence of polyP. The sequence is that of Polyphosphate:AMP phosphotransferase from Pseudomonas aeruginosa (strain ATCC 15692 / DSM 22644 / CIP 104116 / JCM 14847 / LMG 12228 / 1C / PRS 101 / PAO1).